Here is a 203-residue protein sequence, read N- to C-terminus: Dephospho-CoA kinase (203 aa).

Residues 3-201 (SVGLTGGIGS…QRYLECAAAA (199 aa)) form the DPCK domain. Residue 11–16 (GSGKTT) participates in ATP binding.

Belongs to the CoaE family.

The protein localises to the cytoplasm. The catalysed reaction is 3'-dephospho-CoA + ATP = ADP + CoA + H(+). It participates in cofactor biosynthesis; coenzyme A biosynthesis; CoA from (R)-pantothenate: step 5/5. In terms of biological role, catalyzes the phosphorylation of the 3'-hydroxyl group of dephosphocoenzyme A to form coenzyme A. This Burkholderia pseudomallei (strain 1710b) protein is Dephospho-CoA kinase.